A 258-amino-acid chain; its full sequence is Ribosomal RNA small subunit methyltransferase J (258 aa).

S-adenosyl-L-methionine-binding positions include 107–108, 123–124, and aspartate 177; these read RD and ER.

This sequence belongs to the methyltransferase superfamily. RsmJ family.

Its subcellular location is the cytoplasm. It catalyses the reaction guanosine(1516) in 16S rRNA + S-adenosyl-L-methionine = N(2)-methylguanosine(1516) in 16S rRNA + S-adenosyl-L-homocysteine + H(+). In terms of biological role, specifically methylates the guanosine in position 1516 of 16S rRNA. The polypeptide is Ribosomal RNA small subunit methyltransferase J (Stutzerimonas stutzeri (strain A1501) (Pseudomonas stutzeri)).